A 178-amino-acid chain; its full sequence is tRNA (cytidine(56)-2'-O)-methyltransferase (178 aa).

S-adenosyl-L-methionine is bound by residues leucine 84, 109 to 113 (GAEKV), and 127 to 134 (IGNQPHSE).

The protein belongs to the aTrm56 family. In terms of assembly, homodimer.

It is found in the cytoplasm. The catalysed reaction is cytidine(56) in tRNA + S-adenosyl-L-methionine = 2'-O-methylcytidine(56) in tRNA + S-adenosyl-L-homocysteine + H(+). Functionally, specifically catalyzes the AdoMet-dependent 2'-O-ribose methylation of cytidine at position 56 in tRNAs. This Methanococcoides burtonii (strain DSM 6242 / NBRC 107633 / OCM 468 / ACE-M) protein is tRNA (cytidine(56)-2'-O)-methyltransferase.